Consider the following 494-residue polypeptide: MFLAKSLVCLALLAVANAQFDTNYASGRSGMVHLFEWKWDDIAAECENFLGPNGFAGVQVSPVNENAVKDSRPWWERYQPISYKLETRSGNEQQFASMVKRCNAVGVRIYVDVIFNHMAADGGTYGTGGSTASPSSKSYPGVPYSSLDFNPTCAINNYNDANQVRNCELVGLRDLNQGNSYVQDKVVEFLDHLIDLGVAGFRVDAAKHMWPADLAVIYGRLKNLNTDHGFASGSKAYIVQEVIDMGGEAISKSEYTGLGAITEFRHSDSIGKVFRGKDQLQYLTNWGTAWGFAASDRSLVFVDNHDNQRGHGAGGADVLTYKVPKQYKMASAFMLAHPFGTPRVMSSFSFSDTDQGPPTTDGHNIASPVFNSDNSCSGGWVCEHRWRQIYNMVAFRNTVGSDAIQNWWDNGSNQISFSRGSRGFVAFNNDNYDLNSSLQTGLPAGTYCDVISGSKSGSSCTGKTVSVGSDGRASIYIGSSEDDGVLAIHVNAKL.

The first 18 residues, 1-18 (MFLAKSLVCLALLAVANA), serve as a signal peptide directing secretion. Gln-19 is modified (pyrrolidone carboxylic acid). Residues Cys-46 and Cys-102 are joined by a disulfide bond. Ca(2+) contacts are provided by Asn-116, Arg-165, and Asp-174. Cysteines 153 and 167 form a disulfide. Arg-202 contacts chloride. Asp-204 functions as the Nucleophile in the catalytic mechanism. Position 208 (His-208) interacts with Ca(2+). Glu-241 acts as the Proton donor in catalysis. Residues Asn-304 and Arg-343 each coordinate chloride. 2 disulfide bridges follow: Cys-376-Cys-382 and Cys-448-Cys-460.

This sequence belongs to the glycosyl hydrolase 13 family. Monomer. The cofactor is Ca(2+). Chloride is required as a cofactor.

The catalysed reaction is Endohydrolysis of (1-&gt;4)-alpha-D-glucosidic linkages in polysaccharides containing three or more (1-&gt;4)-alpha-linked D-glucose units.. This chain is Alpha-amylase A (Amy-d), found in Drosophila mauritiana (Fruit fly).